The chain runs to 393 residues: uncharacterized protein (393 aa).

This is an uncharacterized protein from Treponema pallidum (strain Nichols).